We begin with the raw amino-acid sequence, 385 residues long: 1-deoxy-D-xylulose 5-phosphate reductoisomerase (385 aa).

NADPH is bound by residues threonine 11, glycine 12, serine 13, isoleucine 14, alanine 37, arginine 38, asparagine 39, and asparagine 123. Lysine 124 serves as a coordination point for 1-deoxy-D-xylulose 5-phosphate. Glutamate 125 lines the NADPH pocket. Aspartate 149 is a Mn(2+) binding site. 1-deoxy-D-xylulose 5-phosphate-binding residues include serine 150, glutamate 151, serine 173, and histidine 196. A Mn(2+)-binding site is contributed by glutamate 151. Glycine 202 is an NADPH binding site. 1-deoxy-D-xylulose 5-phosphate contacts are provided by serine 209, asparagine 214, lysine 215, and glutamate 218. Residue glutamate 218 participates in Mn(2+) binding.

This sequence belongs to the DXR family. It depends on Mg(2+) as a cofactor. Mn(2+) is required as a cofactor.

The catalysed reaction is 2-C-methyl-D-erythritol 4-phosphate + NADP(+) = 1-deoxy-D-xylulose 5-phosphate + NADPH + H(+). It functions in the pathway isoprenoid biosynthesis; isopentenyl diphosphate biosynthesis via DXP pathway; isopentenyl diphosphate from 1-deoxy-D-xylulose 5-phosphate: step 1/6. Its function is as follows. Catalyzes the NADPH-dependent rearrangement and reduction of 1-deoxy-D-xylulose-5-phosphate (DXP) to 2-C-methyl-D-erythritol 4-phosphate (MEP). The polypeptide is 1-deoxy-D-xylulose 5-phosphate reductoisomerase (Moorella thermoacetica (strain ATCC 39073 / JCM 9320)).